A 214-amino-acid polypeptide reads, in one-letter code: Calcineurin B homologous protein 3 (214 aa).

The N-myristoyl glycine moiety is linked to residue glycine 2. One can recognise an EF-hand domain in the interval 110–145 (CRTDKLRFLFNMYDSDNDNKITLEEYRKVVEELLSG). Aspartate 123, aspartate 125, aspartate 127, lysine 129, and glutamate 134 together coordinate Ca(2+).

This sequence belongs to the calcineurin regulatory subunit family. CHP subfamily. In terms of assembly, monomer. Homodimer.

The protein resides in the nucleus. The protein localises to the cytoplasm. It is found in the membrane. It localises to the cell membrane. Its subcellular location is the cell projection. The protein resides in the lamellipodium. The protein localises to the ruffle membrane. In terms of biological role, functions as an integral cofactor in cell pH regulation by controlling plasma membrane-type Na(+)/H(+) exchange activity. Promotes the induction of hematopoietic stem cell differentiation toward megakaryocytic lineage. Essential for the coupling of ERK cascade activation with the expression of ETS family genes in megakaryocytic differentiation. Also involved in granulocytic differentiation in a ERK-dependent manner. Inhibits the phosphatase activity of calcineurin. This Xenopus laevis (African clawed frog) protein is Calcineurin B homologous protein 3.